Here is a 70-residue protein sequence, read N- to C-terminus: Large ribosomal subunit protein bL31 (70 aa).

Residues C16, C18, C37, and C40 each coordinate Zn(2+). The segment at Q48–K70 is disordered.

This sequence belongs to the bacterial ribosomal protein bL31 family. Type A subfamily. Part of the 50S ribosomal subunit. The cofactor is Zn(2+).

Binds the 23S rRNA. The sequence is that of Large ribosomal subunit protein bL31 from Photobacterium profundum (strain SS9).